The chain runs to 162 residues: Peptide deformylase (162 aa).

Fe cation-binding residues include cysteine 91 and histidine 133. The active site involves glutamate 134. Histidine 137 is a binding site for Fe cation.

Belongs to the polypeptide deformylase family. The cofactor is Fe(2+).

It catalyses the reaction N-terminal N-formyl-L-methionyl-[peptide] + H2O = N-terminal L-methionyl-[peptide] + formate. Removes the formyl group from the N-terminal Met of newly synthesized proteins. Requires at least a dipeptide for an efficient rate of reaction. N-terminal L-methionine is a prerequisite for activity but the enzyme has broad specificity at other positions. In Finegoldia magna (strain ATCC 29328 / DSM 20472 / WAL 2508) (Peptostreptococcus magnus), this protein is Peptide deformylase.